The chain runs to 238 residues: Snake venom metalloproteinase HF-1 (238 aa).

The region spanning 17 to 221 (RYIQLVVVAD…YNPQCILNKP (205 aa)) is the Peptidase M12B domain. D106 lines the Ca(2+) pocket. 2 disulfide bridges follow: C130–C216 and C174–C181. A Zn(2+)-binding site is contributed by H158. E159 is a catalytic residue. Zn(2+)-binding residues include H162 and H168. Residues C216 and N219 each coordinate Ca(2+).

As to quaternary structure, monomer. The cofactor is Zn(2+). In terms of tissue distribution, expressed by the venom gland.

It is found in the secreted. Its activity is regulated as follows. Inhibited by EDTA and EGTA. Inhibited by serum and antihemorrhagic factors Da2-I and Da2-II from D.albiventris. Not inhibited by PMSF or SBT-I. Its function is as follows. Snake venom zinc metalloprotease that is weakly hemorrhagic and has Aalpha, Bbeta fibrinogenolytic activities. Cleaves the Aalpha chain of fibrinogen first, followed by the Bbeta chain and shows no effect on the gamma chain. Has caseinolytic activity. Induces dose-dependent edema. The protein is Snake venom metalloproteinase HF-1 of Bothrops marajoensis (Marajo lancehead).